A 58-amino-acid chain; its full sequence is Sperm protamine P2 (58 aa).

The interval 1–58 is disordered; sequence RRRRRRGKGRGKKRKGKGKKRGKGRRRGSKGRKKKKGKGKKRKRRRRRRRKGSKGKGK.

In terms of tissue distribution, gonads.

It localises to the nucleus. Its subcellular location is the chromosome. Functionally, protamines substitute for histones in the chromatin of sperm during the haploid phase of spermatogenesis. They compact sperm DNA into a highly condensed, stable and inactive complex. The chain is Sperm protamine P2 from Bolinus brandaris (Purple dye murex).